Here is a 257-residue protein sequence, read N- to C-terminus: MKDTSLALHFVSSGTKESLSAQKDLVERYGHVAAEDADIIVALGGDGTMLQALRDFMNTGKPIYGMNRGSVGFLMNEFVIENLPERILAAQMETIRPLVMVAETDDAPPVEALAINEVSLFRQSYQAARIRITIDGKVRLQELVCDGVMVATPAGSTAYNLSAQGPILPLEAPLLALTPVSPFRPRRWGGALLPKHVTVRMDLLETEKRPVNAVADNNEVKSVTSVTVREAPNSQVTILFDKNHSWDERILTEQFRH.

D46 acts as the Proton acceptor in catalysis. Residues 46–47, 116–117, D146, A154, 157–162, and N218 contribute to the NAD(+) site; these read DG, NE, and TAYNLS.

Belongs to the NAD kinase family. A divalent metal cation serves as cofactor.

It is found in the cytoplasm. It catalyses the reaction NAD(+) + ATP = ADP + NADP(+) + H(+). In terms of biological role, involved in the regulation of the intracellular balance of NAD and NADP, and is a key enzyme in the biosynthesis of NADP. Catalyzes specifically the phosphorylation on 2'-hydroxyl of the adenosine moiety of NAD to yield NADP. This chain is NAD kinase, found in Brucella melitensis biotype 1 (strain ATCC 23456 / CCUG 17765 / NCTC 10094 / 16M).